We begin with the raw amino-acid sequence, 303 residues long: Cytosolic-abundant heat soluble protein 3 (303 aa).

Positions 1-19 (MSSRQNQQSSSQHSSSSQQ) are enriched in low complexity. The segment at 1-67 (MSSRQNQQSS…PGSHSEVHEE (67 aa)) is disordered. Residues 170–257 (ARQDEQDAGM…ESAKAQTNVN (88 aa)) are a coiled coil. CAHS motif stretches follow at residues 184–202 (YREE…LERQ) and 221–239 (QERE…LELE). Residues 270 to 280 (KGAIQTSADKS) are compositionally biased toward polar residues. Residues 270-303 (KGAIQTSADKSSTTKTGPTTVTQIKHTEQHTERR) form a disordered region. Low complexity predominate over residues 282–291 (TTKTGPTTVT). Residues 294-303 (KHTEQHTERR) are compositionally biased toward basic and acidic residues.

This sequence belongs to the Cytosolic-abundant heat soluble protein (CAHS) family.

The protein resides in the cytoplasm. In terms of biological role, CAHS proteins are cytosolic heat soluble proteins that seem to contribute to the anhydrobiosis in tardigrades, but their specific mechanisms are yet to be identified. It is possible that protection during anhydrobiosis might occur via the stabilization of vitrifying small molecules such as sugars, but not via the direct glass transition of CAHS proteins themselves. This is Cytosolic-abundant heat soluble protein 3 from Ramazzottius varieornatus (Water bear).